The sequence spans 1040 residues: Multidrug resistance protein MdtB (1040 aa).

Helical transmembrane passes span L25 to A45, D342 to L362, I369 to L389, L396 to I416, I440 to F460, F472 to P492, W537 to I557, L863 to V883, F888 to A908, I911 to V931, P967 to G987, and I998 to I1018.

This sequence belongs to the resistance-nodulation-cell division (RND) (TC 2.A.6) family. MdtB subfamily. As to quaternary structure, part of a tripartite efflux system composed of MdtA, MdtB and MdtC. MdtB forms a heteromultimer with MdtC.

The protein localises to the cell inner membrane. The protein is Multidrug resistance protein MdtB of Citrobacter koseri (strain ATCC BAA-895 / CDC 4225-83 / SGSC4696).